Reading from the N-terminus, the 665-residue chain is Succinate dehydrogenase [ubiquinone] flavoprotein subunit B, mitochondrial (665 aa).

The N-terminal 45 residues, 1 to 45 (MALLKVAPSRLLSRALQLTSTLQNCTATSIAARRNFHFTVYGRKD), are a transit peptide targeting the mitochondrion. Residues Ala-72, Ala-75, Thr-94, Lys-95, and Ser-101 each coordinate FAD. His-102 is modified (tele-8alpha-FAD histidine). Positions 103, 108, 224, and 278 each coordinate FAD. Oxaloacetate contacts are provided by His-299, Arg-343, and His-410. Arg-343 functions as the Proton acceptor in the catalytic mechanism. Glu-443 provides a ligand contact to FAD. Oxaloacetate contacts are provided by Arg-454 and Ala-457. Residues Ser-459 and Leu-460 each contribute to the FAD site.

Belongs to the FAD-dependent oxidoreductase 2 family. FRD/SDH subfamily. In terms of assembly, component of complex II composed of four subunits: a flavoprotein (FP), an iron-sulfur protein (IP), and a cytochrome b composed of a large and a small subunit. FAD is required as a cofactor.

The protein localises to the mitochondrion inner membrane. It carries out the reaction a ubiquinone + succinate = a ubiquinol + fumarate. The enzyme catalyses (R)-malate + a quinone = enol-oxaloacetate + a quinol. It catalyses the reaction (S)-malate + a quinone = enol-oxaloacetate + a quinol. The protein operates within carbohydrate metabolism; tricarboxylic acid cycle; fumarate from succinate (eukaryal route): step 1/1. Its activity is regulated as follows. Enol-oxaloacetate inhibits the succinate dehydrogenase activity. Functionally, flavoprotein (FP) subunit of succinate dehydrogenase (SDH) that is involved in complex II of the mitochondrial electron transport chain and is responsible for transferring electrons from succinate to ubiquinone (coenzyme Q). SDH also oxidizes malate to the non-canonical enol form of oxaloacetate, enol-oxaloacetate. Enol-oxaloacetate, which is a potent inhibitor of the succinate dehydrogenase activity, is further isomerized into keto-oxaloacetate. In Xenopus laevis (African clawed frog), this protein is Succinate dehydrogenase [ubiquinone] flavoprotein subunit B, mitochondrial (sdha-b).